We begin with the raw amino-acid sequence, 175 residues long: Transcriptional repressor NrdR (175 aa).

A zinc finger lies at 3-34 (CPICQDTNSRVLESRSAESGKSIRRRRECMNC). Residues 49–139 (ITIIKRDGKK…VYRKFQGIRD (91 aa)) form the ATP-cone domain.

The protein belongs to the NrdR family. The cofactor is Zn(2+).

In terms of biological role, negatively regulates transcription of bacterial ribonucleotide reductase nrd genes and operons by binding to NrdR-boxes. This chain is Transcriptional repressor NrdR, found in Trichodesmium erythraeum (strain IMS101).